The following is a 322-amino-acid chain: Gas vesicle protein L (322 aa).

The interval 1 to 85 (MTEQSSGSAT…SEQATVDWST (85 aa)) is disordered. The span at 17–36 (ETAKQETGRKNEQPEERTVT) shows a compositional bias: basic and acidic residues. The segment covering 45-57 (INTTTAESETGSE) has biased composition (polar residues). Positions 58–72 (QESKAGSEQESKAGS) are enriched in basic and acidic residues. The segment covering 73–85 (EQESEQATVDWST) has biased composition (polar residues).

Belongs to the gas vesicle GvpF/GvpL family. In terms of assembly, gvpF to GvpM interact with each other in vitro, and may form multi-subunit complex(es). Interacts with GvpC, GvpN and GvpO.

Its subcellular location is the gas vesicle. Its function is as follows. Proteins GvpF to GvpM might be involved in nucleating gas vesicle formation. A minor component of the gas vesicle. Gas vesicles are small, hollow, gas filled protein structures that are found in several microbial planktonic microorganisms. They allow positioning of halobacteria at the optimal depth for growth in the poorly aerated, shallow brine pools of their habitat. In terms of biological role, expression of a 9.5 kb mc-vac DNA fragment containing 2 divergently transcribed regions (gvpD-gvpE-gvpF-gvpG-gvpH-gvpI-gvpJ-gvpK-gvpL-gvpM and gvpA-gvpC-gvpN-gvpO) allows H.volcanii to produce gas vesicles. This chain is Gas vesicle protein L, found in Haloferax mediterranei (strain ATCC 33500 / DSM 1411 / JCM 8866 / NBRC 14739 / NCIMB 2177 / R-4) (Halobacterium mediterranei).